The following is a 192-amino-acid chain: uncharacterized protein (192 aa).

The segment at 168–192 (PLWRKSEAGSRKARTSNSGGPTKRA) is disordered. The segment covering 182 to 192 (TSNSGGPTKRA) has biased composition (polar residues).

It to A.xylinum IS1268 ORFA.

This is an uncharacterized protein from Sinorhizobium fredii (strain NBRC 101917 / NGR234).